The following is a 161-amino-acid chain: 2-C-methyl-D-erythritol 2,4-cyclodiphosphate synthase (161 aa).

A divalent metal cation contacts are provided by aspartate 11 and histidine 13. 4-CDP-2-C-methyl-D-erythritol 2-phosphate-binding positions include 11–13 and 37–38; these read DIH and HS. An a divalent metal cation-binding site is contributed by histidine 45. 4-CDP-2-C-methyl-D-erythritol 2-phosphate-binding positions include 59 to 61, 135 to 138, and arginine 145; these read DIG and TTNE.

The protein belongs to the IspF family. As to quaternary structure, homotrimer. It depends on a divalent metal cation as a cofactor.

It carries out the reaction 4-CDP-2-C-methyl-D-erythritol 2-phosphate = 2-C-methyl-D-erythritol 2,4-cyclic diphosphate + CMP. Its pathway is isoprenoid biosynthesis; isopentenyl diphosphate biosynthesis via DXP pathway; isopentenyl diphosphate from 1-deoxy-D-xylulose 5-phosphate: step 4/6. Its function is as follows. Involved in the biosynthesis of isopentenyl diphosphate (IPP) and dimethylallyl diphosphate (DMAPP), two major building blocks of isoprenoid compounds. Catalyzes the conversion of 4-diphosphocytidyl-2-C-methyl-D-erythritol 2-phosphate (CDP-ME2P) to 2-C-methyl-D-erythritol 2,4-cyclodiphosphate (ME-CPP) with a corresponding release of cytidine 5-monophosphate (CMP). The protein is 2-C-methyl-D-erythritol 2,4-cyclodiphosphate synthase of Synechocystis sp. (strain ATCC 27184 / PCC 6803 / Kazusa).